The primary structure comprises 324 residues: Beta-ketoacyl-[acyl-carrier-protein] synthase III (324 aa).

Active-site residues include Cys-112 and His-249. The tract at residues 250-254 (QANRR) is ACP-binding. Asn-279 is an active-site residue.

It belongs to the thiolase-like superfamily. FabH family. Homodimer.

The protein localises to the cytoplasm. The enzyme catalyses malonyl-[ACP] + acetyl-CoA + H(+) = 3-oxobutanoyl-[ACP] + CO2 + CoA. The protein operates within lipid metabolism; fatty acid biosynthesis. In terms of biological role, catalyzes the condensation reaction of fatty acid synthesis by the addition to an acyl acceptor of two carbons from malonyl-ACP. Catalyzes the first condensation reaction which initiates fatty acid synthesis and may therefore play a role in governing the total rate of fatty acid production. Possesses both acetoacetyl-ACP synthase and acetyl transacylase activities. Its substrate specificity determines the biosynthesis of branched-chain and/or straight-chain of fatty acids. This is Beta-ketoacyl-[acyl-carrier-protein] synthase III from Streptococcus equi subsp. zooepidemicus (strain MGCS10565).